Consider the following 150-residue polypeptide: Small ribosomal subunit protein uS11x (150 aa).

Belongs to the universal ribosomal protein uS11 family.

The protein localises to the cytoplasm. In Arabidopsis thaliana (Mouse-ear cress), this protein is Small ribosomal subunit protein uS11x (RPS14C).